A 237-amino-acid polypeptide reads, in one-letter code: Segregation and condensation protein A (237 aa).

Belongs to the ScpA family. In terms of assembly, component of a cohesin-like complex composed of ScpA, ScpB and the Smc homodimer, in which ScpA and ScpB bind to the head domain of Smc. The presence of the three proteins is required for the association of the complex with DNA.

Its subcellular location is the cytoplasm. In terms of biological role, participates in chromosomal partition during cell division. May act via the formation of a condensin-like complex containing Smc and ScpB that pull DNA away from mid-cell into both cell halves. This chain is Segregation and condensation protein A, found in Streptococcus thermophilus (strain ATCC BAA-250 / LMG 18311).